Reading from the N-terminus, the 251-residue chain is Cell division protein ZapD (251 aa).

Belongs to the ZapD family. In terms of assembly, interacts with FtsZ.

The protein resides in the cytoplasm. Functionally, cell division factor that enhances FtsZ-ring assembly. Directly interacts with FtsZ and promotes bundling of FtsZ protofilaments, with a reduction in FtsZ GTPase activity. The chain is Cell division protein ZapD from Burkholderia lata (strain ATCC 17760 / DSM 23089 / LMG 22485 / NCIMB 9086 / R18194 / 383).